We begin with the raw amino-acid sequence, 396 residues long: 4-hydroxy-3-methylbut-2-en-1-yl diphosphate synthase (ferredoxin) (396 aa).

Positions 305, 308, 339, and 346 each coordinate [4Fe-4S] cluster.

It belongs to the IspG family. The cofactor is [4Fe-4S] cluster.

It carries out the reaction (2E)-4-hydroxy-3-methylbut-2-enyl diphosphate + 2 oxidized [2Fe-2S]-[ferredoxin] + H2O = 2-C-methyl-D-erythritol 2,4-cyclic diphosphate + 2 reduced [2Fe-2S]-[ferredoxin] + H(+). Its pathway is isoprenoid biosynthesis; isopentenyl diphosphate biosynthesis via DXP pathway; isopentenyl diphosphate from 1-deoxy-D-xylulose 5-phosphate: step 5/6. Its function is as follows. Converts 2C-methyl-D-erythritol 2,4-cyclodiphosphate (ME-2,4cPP) into 1-hydroxy-2-methyl-2-(E)-butenyl 4-diphosphate. In Gloeobacter violaceus (strain ATCC 29082 / PCC 7421), this protein is 4-hydroxy-3-methylbut-2-en-1-yl diphosphate synthase (ferredoxin).